We begin with the raw amino-acid sequence, 563 residues long: MPMNNFLDEFNLFDSIITMMKNDPCCVEDYEPIVENLNRIFQRTFNDEEHRKSMANSQLFWERLRDTLEAMLLPASLNENSSIPYTRTVRGLILMMRNLAAENQEIPQKLLLQNLVIRGFLHATSEYVVDTPLIKHLYIACLTCLFNIQQNYSTVDMTTFPALLQFLQYPYGIKLEDGEEEEHFWLPYLFLFKTYLNNDEFSNEFFRDNDTPQKDYYCVRDRIFFDIVTAKFIQDQENSFLIEKGRNYLDDSKLEITSIDLSVLECISKSLTTASFGKYLNGLEERQPGKFTTLLQILQLVVTSKEDWNTYELTAIMSWCYPILQRLACKDIPAFFNKSCNDYAPSVAIQLHSTLLSCLDIISDLCKFNHVRKFLISYDSVKILVSLLDTFQKNLLRINFLKGNGDTVNEIKITDHEGNKIEDRLLIFNRVNTNESFIRADNFPHCKLVIIEILASLVYAHPEIQDQIRELGGLALILSNCVIDDNDPFIKERSIVCLKFLLKNNAKNQEYVKKMEAQDVVQDDALSKAGFEISVEKGGKVRLVSKEEDPGNENSEIISIDED.

T433 is subject to Phosphothreonine. A disordered region spans residues 544-563 (VSKEEDPGNENSEIISIDED). A Phosphoserine modification is found at S559.

Belongs to the ataxin-10 family.

It is found in the cytoplasm. In terms of biological role, may play a role in the regulation of cytokinesis. This is Ataxin-10 homolog (CTR86) from Saccharomyces cerevisiae (strain ATCC 204508 / S288c) (Baker's yeast).